We begin with the raw amino-acid sequence, 128 residues long: Nanos homolog 1 (128 aa).

The essential for its translational repressor activity stretch occupies residues 7 to 23 (FDSWSDYLGLSSLISRG). Residues 23–56 (GLQPRGEGENPSPRWNVSCPAPAEPLPSKEPEGR) form a disordered region. The Nanos-type zinc-finger motif lies at 60-114 (GCGFCRSNKEAMSLYSSHRLRSLDGRVLCPVLRGYTCPLCGANGDWAHTMRYCPL). Zn(2+)-binding residues include cysteine 61, cysteine 64, histidine 77, cysteine 88, cysteine 96, cysteine 99, histidine 107, and cysteine 112. Short sequence motifs (C2HC) lie at residues 61–88 (CGFCRSNKEAMSLYSSHRLRSLDGRVLC) and 96–112 (CPLCGANGDWAHTMRYC).

This sequence belongs to the nanos family. In terms of assembly, interacts with ccnb1.

It is found in the cytoplasm. The protein resides in the perinuclear region. In terms of biological role, acts as a translational repressor. Can mediate repression affecting different steps in the translation process: cap-driven, IRES-driven, polyadenylated RNAs or nonpolyadenylated RNAs. Essential for the development of primordial germ cells (PGCs) by ensuring their proper migration and survival. This is Nanos homolog 1 (nanos1) from Xenopus borealis (Kenyan clawed frog).